The primary structure comprises 149 residues: UPF0310 protein SSO2595 (149 aa).

It belongs to the UPF0310 family.

This is UPF0310 protein SSO2595 from Saccharolobus solfataricus (strain ATCC 35092 / DSM 1617 / JCM 11322 / P2) (Sulfolobus solfataricus).